We begin with the raw amino-acid sequence, 267 residues long: Glutamate racemase (267 aa).

Residues 9–10 (DS) and 41–42 (YS) contribute to the substrate site. Cys73 acts as the Proton donor/acceptor in catalysis. Position 74 to 75 (74 to 75 (NT)) interacts with substrate. Cys184 (proton donor/acceptor) is an active-site residue. 185 to 186 (TH) contacts substrate.

This sequence belongs to the aspartate/glutamate racemases family.

The enzyme catalyses L-glutamate = D-glutamate. The protein operates within cell wall biogenesis; peptidoglycan biosynthesis. Provides the (R)-glutamate required for cell wall biosynthesis. This Glaesserella parasuis serovar 5 (strain SH0165) (Haemophilus parasuis) protein is Glutamate racemase.